The following is a 559-amino-acid chain: Chromatin assembly factor 1 subunit B (559 aa).

WD repeat units follow at residues 11 to 54 (HNKE…DGKA), 64 to 103 (RHTKAVNVVRFSPTGEILASGGDDAVILLWKVNDNKEPEQ), 127 to 166 (GHLEDVYDICWATDGNLMASASVDNTAIIWDVSKGQKISI), 169 to 208 (EHKSYVQGVTWDPLGQYVATLSCDRVLRVYSIQKKRVAFN), 228 to 279 (FHDD…RPIA), 299 to 340 (ELRP…PFGY), and 344 to 385 (IHYH…IPLK). Positions 386–559 (EKPVLNMRTP…NKGGTESLDP (174 aa)) are disordered. Phosphothreonine is present on Thr394. Ser409 bears the Phosphoserine mark. Phosphothreonine is present on Thr419. Ser429 carries the post-translational modification Phosphoserine. A compositionally biased stretch (low complexity) spans 430–444 (PGTTPPQARQAPAPT). Residue Thr433 is modified to Phosphothreonine. Phosphoserine is present on Ser458. Residues 469-495 (LQPSSQNTKAHPSRRVTLNTLQAWSKT) are compositionally biased toward polar residues. Residue Lys494 is modified to N6-acetyllysine. Residues Thr495, Thr509, Thr521, and Thr531 each carry the phosphothreonine modification. The span at 509–526 (TPPSSVPTSVISTPSTEE) shows a compositional bias: low complexity. Ser538 carries the phosphoserine modification. The segment covering 541–552 (ELKRPRLDENKG) has biased composition (basic and acidic residues).

Belongs to the WD repeat HIR1 family. Subunit of the CAF-1 complex that contains RBBP4, CHAF1B and CHAF1A. CHAF1A binds directly to CHAF1B. Only minor amounts of RBBP4 are complexed with CHAF1A and CHAF1B in G1 phase. In G2 and S phase also monomeric CHAF1B is detected. Interacts with histones H3.1, H3.2 and H3.1t. Post-translationally, differentially phosphorylated during cell cycle. During mitosis the p60 subunit of inactive CAF-1 is hyperphosphorylated and displaced into the cytosol. Progressivly dephosphorylated from G1 to S and G2 phase. Phosphorylated p60 is recruited to chromatin undergoing DNA repair after UV irradiation in G1, S or G2 phases.

Its subcellular location is the nucleus. It is found in the cytoplasm. Its function is as follows. Acts as a component of the histone chaperone complex chromatin assembly factor 1 (CAF-1), which assembles histone octamers onto DNA during replication and repair. CAF-1 performs the first step of the nucleosome assembly process, bringing newly synthesized histones H3 and H4 to replicating DNA; histones H2A/H2B can bind to this chromatin precursor subsequent to DNA replication to complete the histone octamer. This is Chromatin assembly factor 1 subunit B from Homo sapiens (Human).